A 504-amino-acid polypeptide reads, in one-letter code: uncharacterized protein (504 aa).

Disordered regions lie at residues 1–59 (MSSS…KNEY) and 171–255 (GVNS…NQRL). Basic and acidic residues-rich tracts occupy residues 36 to 50 (KPID…KEIG) and 199 to 212 (RAET…ESRQ). The span at 213 to 232 (SNRGNNDNGDQRMTSKATTR) shows a compositional bias: polar residues.

This is an uncharacterized protein from Caenorhabditis elegans.